The chain runs to 477 residues: NADH-quinone oxidoreductase subunit N (477 aa).

13 helical membrane-spanning segments follow: residues 7-27, 37-57, 77-97, 109-129, 162-182, 201-221, 233-253, 272-292, 297-317, 323-343, 369-389, 402-424, and 446-466; these read VLAHALPELILAGGVLLLILI, GPMTELAVGLLGIAILTLVLG, FMKVLVLIGSLVSLIMGQTYL, ILILLSTLGMLMLISATGLIA, FVLGALSSGMLLYGASLIYGF, LGVVFGLVFLTAGLAFKMSTV, GAPTPVTAFFASAPKLAAIAI, IIVFISILSMALGSFAAIGQT, LMAYSSIGHMGFALVGLAAGT, GVLAYMAIYLVMTLGTFAAIL, AFFLAIMMFSLAGIPPLAGFF, HLYPLAVIGVLCSTVGAYYYLRI, and AVLIVTGLAVLLLCVYPGSFV.

It belongs to the complex I subunit 2 family. In terms of assembly, NDH-1 is composed of 14 different subunits. Subunits NuoA, H, J, K, L, M, N constitute the membrane sector of the complex.

It localises to the cell inner membrane. The catalysed reaction is a quinone + NADH + 5 H(+)(in) = a quinol + NAD(+) + 4 H(+)(out). Its function is as follows. NDH-1 shuttles electrons from NADH, via FMN and iron-sulfur (Fe-S) centers, to quinones in the respiratory chain. The immediate electron acceptor for the enzyme in this species is believed to be ubiquinone. Couples the redox reaction to proton translocation (for every two electrons transferred, four hydrogen ions are translocated across the cytoplasmic membrane), and thus conserves the redox energy in a proton gradient. This chain is NADH-quinone oxidoreductase subunit N, found in Beijerinckia indica subsp. indica (strain ATCC 9039 / DSM 1715 / NCIMB 8712).